The primary structure comprises 184 residues: Phosphodiesterase YfcE (184 aa).

Asp-9, His-11, Asp-37, Asn-73, His-105, His-127, and His-129 together coordinate Mn(2+).

This sequence belongs to the metallophosphoesterase superfamily. YfcE family. The cofactor is Mn(2+).

Functionally, shows phosphodiesterase activity. The chain is Phosphodiesterase YfcE (yfcE) from Escherichia coli O157:H7.